Here is a 219-residue protein sequence, read N- to C-terminus: MTIEISAKTVKELRERTSAGMMDCKKALQECNGDFEKAVETLKQKGLVSAAKKAARVATEGIIESYIHMGGKLGILVELNCETDFVARRPEFQELAKNIAMQIAACPNVDYIKTSDIPNEIIQKEKETEMNKNDLDNKPTEIKEKIVEGRIQKRLKELSLMDQSYIRDSSILIEELIKENIAKLGENIQIRRFERFTLGEGLEKREDNFNEEVNKMLTK.

This sequence belongs to the EF-Ts family.

Its subcellular location is the plastid. It localises to the chloroplast. Its function is as follows. Associates with the EF-Tu.GDP complex and induces the exchange of GDP to GTP. It remains bound to the aminoacyl-tRNA.EF-Tu.GTP complex up to the GTP hydrolysis stage on the ribosome. The chain is Elongation factor Ts, chloroplastic (tsf) from Guillardia theta (Cryptophyte).